A 274-amino-acid chain; its full sequence is Coagulation factor IX (274 aa).

Sulfotyrosine is present on Tyr-23. The N-linked (GlcNAc...) asparagine glycan is linked to Asn-25. Position 26 is a phosphoserine (Ser-26). An N-linked (GlcNAc...) asparagine glycan is attached at Asn-35. Thr-37 carries an O-linked (GalNAc...) threonine glycan. An N-linked (GlcNAc...) asparagine glycan is attached at Asn-40. The region spanning Val-49 to Val-274 is the Peptidase S1 domain. A disulfide bond links Cys-74 and Cys-90. The Charge relay system role is filled by His-89. Ca(2+) contacts are provided by Glu-103, Asn-105, Glu-110, and Glu-113. Residue Asn-128 is glycosylated (N-linked (GlcNAc...) asparagine). The Charge relay system role is filled by Asp-137. Intrachain disulfides connect Cys-204-Cys-218 and Cys-229-Cys-257. Ser-233 acts as the Charge relay system in catalysis.

It belongs to the peptidase S1 family. Heterodimer of a light chain and a heavy chain; disulfide-linked. Interacts (inactive and activated) with F11 (activated) in calcium-dependent manner. Interacts with SERPINC1. In terms of processing, activated by factor XIa, which excises the activation peptide. The propeptide can also be removed by snake venom protease. Activated by coagulation factor VIIa-tissue factor (F7-F3) complex in calcium-dependent manner.

It is found in the secreted. It carries out the reaction Selective cleavage of Arg-|-Ile bond in factor X to form factor Xa.. Factor IX is a vitamin K-dependent plasma protein that participates in the intrinsic pathway of blood coagulation by converting factor X to its active form in the presence of Ca(2+) ions, phospholipids, and factor VIIIa. In Ovis aries (Sheep), this protein is Coagulation factor IX (F9).